Consider the following 346-residue polypeptide: 3-dehydroquinate synthase (346 aa).

Residues 62-67 (DGEEYK), 96-100 (GVISD), 120-121 (TT), Lys-133, Lys-142, and 160-163 (FLRT) each bind NAD(+). Residues Glu-175, His-234, and His-251 each contribute to the Zn(2+) site.

Belongs to the sugar phosphate cyclases superfamily. Dehydroquinate synthase family. The cofactor is Co(2+). Zn(2+) is required as a cofactor. Requires NAD(+) as cofactor.

Its subcellular location is the cytoplasm. It carries out the reaction 7-phospho-2-dehydro-3-deoxy-D-arabino-heptonate = 3-dehydroquinate + phosphate. Its pathway is metabolic intermediate biosynthesis; chorismate biosynthesis; chorismate from D-erythrose 4-phosphate and phosphoenolpyruvate: step 2/7. Catalyzes the conversion of 3-deoxy-D-arabino-heptulosonate 7-phosphate (DAHP) to dehydroquinate (DHQ). This chain is 3-dehydroquinate synthase, found in Campylobacter curvus (strain 525.92).